The sequence spans 66 residues: Beta-toxin Chui4 (66 aa).

Residues 1–66 (KEGYLVELGT…VWPLKNKTCK (66 aa)) enclose the LCN-type CS-alpha/beta domain. Intrachain disulfides connect cysteine 12–cysteine 65, cysteine 16–cysteine 41, cysteine 25–cysteine 46, and cysteine 29–cysteine 48.

This sequence belongs to the long (4 C-C) scorpion toxin superfamily. Sodium channel inhibitor family. Beta subfamily. In terms of tissue distribution, expressed by the venom gland.

It is found in the secreted. In terms of biological role, beta toxins bind voltage-independently at site-4 of sodium channels (Nav) and shift the voltage of activation toward more negative potentials thereby affecting sodium channel activation and promoting spontaneous and repetitive firing. Acts on human sodium channel Nav1.6/SCN8A. Also able to weakly shift the activation curves of human Nav1.2/SCN2A and Nav1.4/SCN4A. The protein is Beta-toxin Chui4 of Centruroides huichol (Scorpion).